We begin with the raw amino-acid sequence, 759 residues long: Inhibitor of nuclear factor kappa-B kinase subunit alpha (759 aa).

Residues methionine 1–glycine 20 form a disordered region. The Protein kinase domain occupies tryptophan 29–leucine 316. ATP is bound by residues leucine 35–valine 43 and lysine 58. Aspartate 158 (proton acceptor) is an active-site residue. A leucine-zipper region spans residues leucine 469–leucine 490. Positions threonine 691–glutamate 703 are enriched in polar residues. A disordered region spans residues threonine 691–proline 715. Positions phenylalanine 753–leucine 758 are NEMO-binding.

It belongs to the protein kinase superfamily. Ser/Thr protein kinase family. I-kappa-B kinase subfamily.

It is found in the cytoplasm. It localises to the nucleus. The enzyme catalyses L-seryl-[I-kappa-B protein] + ATP = O-phospho-L-seryl-[I-kappa-B protein] + ADP + H(+). Activated when phosphorylated and inactivated when dephosphorylated. Phosphorylates inhibitors of NF-kappa-B thus leading to the dissociation of the inhibitor/NF-kappa-B complex and ultimately the degradation of the inhibitor. Phosphorylates 'Ser-10' of histone H3 at NF-kappa-B-regulated promoters during inflammatory responses triggered by cytokines. The polypeptide is Inhibitor of nuclear factor kappa-B kinase subunit alpha (CHUK) (Gallus gallus (Chicken)).